Consider the following 413-residue polypeptide: Eukaryotic initiation factor 4A-7 (413 aa).

A Q motif motif is present at residues Asp40–Gln68. The Helicase ATP-binding domain maps to Ile71–Ile241. ATP is bound at residue Ala84 to Thr91. Positions Asp189–Asp192 match the DEAD box motif. Residues Gly252 to Leu413 enclose the Helicase C-terminal domain.

Belongs to the DEAD box helicase family. eIF4A subfamily. EIF4F is a multi-subunit complex, the composition of which varies with external and internal environmental conditions. It is composed of at least EIF4A, EIF4E and EIF4G.

The enzyme catalyses ATP + H2O = ADP + phosphate + H(+). ATP-dependent RNA helicase which is a subunit of the eIF4F complex involved in cap recognition and is required for mRNA binding to ribosome. In the current model of translation initiation, eIF4A unwinds RNA secondary structures in the 5'-UTR of mRNAs which is necessary to allow efficient binding of the small ribosomal subunit, and subsequent scanning for the initiator codon. This Nicotiana tabacum (Common tobacco) protein is Eukaryotic initiation factor 4A-7.